The chain runs to 387 residues: 3-ketoacyl-CoA thiolase (387 aa).

The Acyl-thioester intermediate role is filled by cysteine 91. Active-site proton acceptor residues include histidine 343 and cysteine 373.

The protein belongs to the thiolase-like superfamily. Thiolase family. In terms of assembly, heterotetramer of two alpha chains (FadB) and two beta chains (FadA).

Its subcellular location is the cytoplasm. It carries out the reaction an acyl-CoA + acetyl-CoA = a 3-oxoacyl-CoA + CoA. The protein operates within lipid metabolism; fatty acid beta-oxidation. Its function is as follows. Catalyzes the final step of fatty acid oxidation in which acetyl-CoA is released and the CoA ester of a fatty acid two carbons shorter is formed. This Shewanella loihica (strain ATCC BAA-1088 / PV-4) protein is 3-ketoacyl-CoA thiolase.